A 398-amino-acid chain; its full sequence is ATP-dependent (S)-NAD(P)H-hydrate dehydratase 1 (398 aa).

Positions 80–391 constitute a YjeF C-terminal domain; the sequence is LLRKAFQMIP…GYIGEAFELV (312 aa). (6S)-NADPHX-binding positions include Gly187 and 240–246; that span reads NHVEFQR. Residues 280–284 and 300–309 each bind ATP; these read KGSID and GSPKRCGGQG. Asp310 serves as a coordination point for (6S)-NADPHX.

Belongs to the NnrD/CARKD family. Requires Mg(2+) as cofactor.

It is found in the cytoplasm. The enzyme catalyses (6S)-NADHX + ATP = ADP + phosphate + NADH + H(+). It catalyses the reaction (6S)-NADPHX + ATP = ADP + phosphate + NADPH + H(+). Its function is as follows. Catalyzes the dehydration of the S-form of NAD(P)HX at the expense of ATP, which is converted to ADP. Together with NAD(P)HX epimerase, which catalyzes the epimerization of the S- and R-forms, the enzyme allows the repair of both epimers of NAD(P)HX, a damaged form of NAD(P)H that is a result of enzymatic or heat-dependent hydration. The protein is ATP-dependent (S)-NAD(P)H-hydrate dehydratase 1 of Puccinia graminis f. sp. tritici (strain CRL 75-36-700-3 / race SCCL) (Black stem rust fungus).